We begin with the raw amino-acid sequence, 276 residues long: MNRGMTLIELLVALALSIILSLGLYYSFRYSGIFFSQDKAISDLIEYARTAEEQLKFYFDRWGNGVPEGGTDCTYSFPNGYPKNRFCIIKGSSGNCDEIIFYGNTQGFLIVLDEKDEDEFNALACRMTNDEDDYYYIWKEDKPVDTTTGNRIGVSGGDCGIKGIIPNASVAKEINTLDKGTVTLQTGDAIIRVPKIIKIYCSETNGELYLKVSEQEANKAPVESPLVPVKEMEATLLPEGCDPTNGECTAVRFRITFVNRVGNEEYTLTKDIVLGR.

A propeptide spans 1–4 (leader sequence); that stretch reads MNRG. An N-methylmethionine modification is found at M5. A helical transmembrane segment spans residues 5–26; it reads MTLIELLVALALSIILSLGLYY.

The protein resides in the membrane. This is an uncharacterized protein from Aquifex aeolicus (strain VF5).